A 102-amino-acid chain; its full sequence is MRIAIVGGQNHNQETYGKLLGKTGRVEIHFYDGIPKKHNKRNLEKLIKDVDLVIVILGACSHASMWDTKKAAKKCHKEVLFSRGIGISSIVKQIAGKPAYTA.

The protein belongs to the UPF0751 family.

The sequence is that of UPF0751 protein Dhaf_1351 from Desulfitobacterium hafniense (strain DSM 10664 / DCB-2).